The following is a 158-amino-acid chain: Transcription elongation factor GreA (158 aa).

A coiled-coil region spans residues 48 to 75 (NSEYDSAKEDQAFVEGRIAQLEKMIRNA).

The protein belongs to the GreA/GreB family.

Its function is as follows. Necessary for efficient RNA polymerase transcription elongation past template-encoded arresting sites. The arresting sites in DNA have the property of trapping a certain fraction of elongating RNA polymerases that pass through, resulting in locked ternary complexes. Cleavage of the nascent transcript by cleavage factors such as GreA or GreB allows the resumption of elongation from the new 3'terminus. GreA releases sequences of 2 to 3 nucleotides. This Shouchella clausii (strain KSM-K16) (Alkalihalobacillus clausii) protein is Transcription elongation factor GreA.